Here is an 809-residue protein sequence, read N- to C-terminus: Histone H2A deubiquitinase MYSM1 (809 aa).

The SANT domain occupies 33–78 (GYEPNWMFDHGQEIYGRSWTSISQFVQTRTPLQVKNYARHFFKTKV). Disordered stretches follow at residues 113–140 (PAQP…VTED) and 320–378 (DATD…KETY). Composition is skewed to basic and acidic residues over residues 335-345 (TLDHPEDRSKP) and 363-378 (TDGR…KETY). The SWIRM domain occupies 410–508 (FKKPTEEVVL…FGCEEANRGE (99 aa)). Positions 592–719 (VKIHATALVT…YSSTRISPLS (128 aa)) constitute an MPN domain. 3 residues coordinate Zn(2+): His-671, His-673, and Asp-684. The short motif at 671–684 (HSHPTFAPNPSVRD) is the JAMM motif element.

The protein belongs to the peptidase M67A family. MYSM1 subfamily.

It localises to the nucleus. In terms of biological role, metalloprotease that specifically deubiquitinates monoubiquitinated histone H2A, a specific tag for epigenetic transcriptional repression, thereby acting as a coactivator. Preferentially deubiquitinates monoubiquitinated H2A in hyperacetylated nucleosomes. Deubiquitination of histone H2A leads to facilitate the phosphorylation and dissociation of histone H1 from the nucleosome. Acts as a coactivator by participating in the initiation and elongation steps of androgen receptor (AR)-induced gene activation. The sequence is that of Histone H2A deubiquitinase MYSM1 (MYSM1) from Branchiostoma floridae (Florida lancelet).